We begin with the raw amino-acid sequence, 373 residues long: tRNA-specific 2-thiouridylase MnmA (373 aa).

Residues Gly-12–Ser-19 and Met-38 each bind ATP. Positions Asn-98–Asp-100 are interaction with target base in tRNA. Cys-103 functions as the Nucleophile in the catalytic mechanism. Residues Cys-103 and Cys-200 are joined by a disulfide bond. Gly-128 lines the ATP pocket. Residues Lys-150–Gln-152 form an interaction with tRNA region. Cys-200 serves as the catalytic Cysteine persulfide intermediate. Residues Arg-312–Tyr-313 are interaction with tRNA.

It belongs to the MnmA/TRMU family. As to quaternary structure, interacts with TusE.

The protein localises to the cytoplasm. The catalysed reaction is S-sulfanyl-L-cysteinyl-[protein] + uridine(34) in tRNA + AH2 + ATP = 2-thiouridine(34) in tRNA + L-cysteinyl-[protein] + A + AMP + diphosphate + H(+). Its function is as follows. Catalyzes the 2-thiolation of uridine at the wobble position (U34) of tRNA(Lys), tRNA(Glu) and tRNA(Gln), leading to the formation of s(2)U34, the first step of tRNA-mnm(5)s(2)U34 synthesis. Sulfur is provided by IscS, via a sulfur-relay system. Binds ATP and its substrate tRNAs. The polypeptide is tRNA-specific 2-thiouridylase MnmA (Yersinia enterocolitica serotype O:8 / biotype 1B (strain NCTC 13174 / 8081)).